The primary structure comprises 1359 residues: DNA-directed RNA polymerase subunit beta (1359 aa).

Belongs to the RNA polymerase beta chain family. In terms of assembly, the RNAP catalytic core consists of 2 alpha, 1 beta, 1 beta' and 1 omega subunit. When a sigma factor is associated with the core the holoenzyme is formed, which can initiate transcription.

The enzyme catalyses RNA(n) + a ribonucleoside 5'-triphosphate = RNA(n+1) + diphosphate. DNA-dependent RNA polymerase catalyzes the transcription of DNA into RNA using the four ribonucleoside triphosphates as substrates. The protein is DNA-directed RNA polymerase subunit beta of Nitrosococcus oceani (strain ATCC 19707 / BCRC 17464 / JCM 30415 / NCIMB 11848 / C-107).